Consider the following 264-residue polypeptide: Accessory gland-specific peptide 26Aa (264 aa).

Positions 1 to 18 (MNQILLCSPILLLLFTVA) are cleaved as a signal peptide. The sufficient for promoting ovulation when expressed in females stretch occupies residues 1-138 (MNQILLCSPI…LQQRLLTEQN (138 aa)). N-linked (GlcNAc...) asparagine glycans are attached at residues N88, N122, N138, and N145. Residues 189–219 (LQNTRKSTKPCKKRSSKDSAPPAANQFQEAN) are disordered. The segment covering 194-203 (KSTKPCKKRS) has biased composition (basic residues). The necessary and sufficient for homodimerization stretch occupies residues 219–264 (NVRNTYRNKYLTLLKELSQKINNEIAKVATDVPTETNPSQGNLPTL).

In terms of assembly, homodimer. May form a homodimer. In terms of processing, glycosylation. Post-translationally, undergoes several cleavages as it is secreted and is further processed in the recipient female. The precursor molecule is proteolytically cleaved by the seminal metalloprotease Semp1 at Lys-48 to produce CP1-N and CP1-C. Cleaved at Lys-67 by Semp1 to generate CP2-N and CP2-C. Cleavage appears to take place in the mated female genital tract. In terms of processing, cleaved at Lys-117 by Semp1 to generate CP3-N and CP3-C. Cleavage appears to take place in the mated female genital tract. Produced in the male accessory glands and secreted into seminal fluid (at protein level). Detected in the main cells and secondary cells of the accessory glands of 1 day old males (at protein level). In 5 day old males, confined to the secondary cells and only reappears in the main cells after mating (at protein level). Produced in adult males 3-4 hr after eclosion, levels increase reaching a peak at day 3-5 which is maintained until at least day 10 of adulthood (at protein level). In unmated male adults, levels are maintained for the first 6 days of adulthood and then gradually decrease for at least the next 8 days. In mated females, detected in the genital tract 3 minutes after the start of mating (ASM) and is secreted into the female hemolymph via the posterior vaginal wall 5 minutes ASM (at protein level).

The protein localises to the secreted. It is found in the cytoplasm. Functionally, male seminal protein which enhances ovulation in female Drosophila by stimulating the release of oocytes by the ovary following mating. Acts by increasing octopamine (OA) neuronal signaling in the female genital tract leading to the postmating relaxation of the oviduct muscles. This activation of the OA signaling pathway is likely to indirectly contribute to the mating-dependent increase in the number of OA synaptic sites in the female reproductive tract. Male seminal peptide which is able to enhance ovulation in female Drosophila. The polypeptide is Accessory gland-specific peptide 26Aa (Drosophila melanogaster (Fruit fly)).